We begin with the raw amino-acid sequence, 1372 residues long: DNA-directed RNA polymerase subunit beta (1372 aa).

This sequence belongs to the RNA polymerase beta chain family. As to quaternary structure, the RNAP catalytic core consists of 2 alpha, 1 beta, 1 beta' and 1 omega subunit. When a sigma factor is associated with the core the holoenzyme is formed, which can initiate transcription.

It carries out the reaction RNA(n) + a ribonucleoside 5'-triphosphate = RNA(n+1) + diphosphate. Functionally, DNA-dependent RNA polymerase catalyzes the transcription of DNA into RNA using the four ribonucleoside triphosphates as substrates. The polypeptide is DNA-directed RNA polymerase subunit beta (Bradyrhizobium diazoefficiens (strain JCM 10833 / BCRC 13528 / IAM 13628 / NBRC 14792 / USDA 110)).